Consider the following 269-residue polypeptide: Cytochrome c oxidase subunit 3 (269 aa).

A run of 7 helical transmembrane segments spans residues 19 to 39, 44 to 64, 87 to 107, 135 to 155, 170 to 190, 205 to 225, and 247 to 267; these read PWPF…TLYL, HSSV…YLWF, IGFM…FWAF, LEVP…LTYA, GLYM…YEYW, FYFA…LLLA, and IYYW…IYIW.

Belongs to the cytochrome c oxidase subunit 3 family. Component of the cytochrome c oxidase (complex IV, CIV), a multisubunit enzyme composed of a catalytic core of 3 subunits and several supernumerary subunits. The complex exists as a monomer or a dimer and forms supercomplexes (SCs) in the inner mitochondrial membrane with ubiquinol-cytochrome c oxidoreductase (cytochrome b-c1 complex, complex III, CIII).

Its subcellular location is the mitochondrion inner membrane. It carries out the reaction 4 Fe(II)-[cytochrome c] + O2 + 8 H(+)(in) = 4 Fe(III)-[cytochrome c] + 2 H2O + 4 H(+)(out). Functionally, component of the cytochrome c oxidase, the last enzyme in the mitochondrial electron transport chain which drives oxidative phosphorylation. The respiratory chain contains 3 multisubunit complexes succinate dehydrogenase (complex II, CII), ubiquinol-cytochrome c oxidoreductase (cytochrome b-c1 complex, complex III, CIII) and cytochrome c oxidase (complex IV, CIV), that cooperate to transfer electrons derived from NADH and succinate to molecular oxygen, creating an electrochemical gradient over the inner membrane that drives transmembrane transport and the ATP synthase. Cytochrome c oxidase is the component of the respiratory chain that catalyzes the reduction of oxygen to water. Electrons originating from reduced cytochrome c in the intermembrane space (IMS) are transferred via the dinuclear copper A center (CU(A)) of subunit 2 and heme A of subunit 1 to the active site in subunit 1, a binuclear center (BNC) formed by heme A3 and copper B (CU(B)). The BNC reduces molecular oxygen to 2 water molecules using 4 electrons from cytochrome c in the IMS and 4 protons from the mitochondrial matrix. This Schizosaccharomyces pombe (strain 972 / ATCC 24843) (Fission yeast) protein is Cytochrome c oxidase subunit 3 (cox3).